Reading from the N-terminus, the 65-residue chain is KDGYPMDNKGCKIACVINNQYCETECVTVLKGKKGYCYFWKLACYCEGLPNWAKVWDRATNKCRA.

The 64-residue stretch at 1–64 (KDGYPMDNKG…VWDRATNKCR (64 aa)) folds into the LCN-type CS-alpha/beta domain. Disulfide bonds link cysteine 11–cysteine 63, cysteine 15–cysteine 37, cysteine 22–cysteine 44, and cysteine 26–cysteine 46.

The protein belongs to the long (4 C-C) scorpion toxin superfamily. Sodium channel inhibitor family. Beta subfamily. In terms of tissue distribution, expressed by the venom gland.

Its subcellular location is the secreted. In terms of biological role, beta toxins bind voltage-independently at site-4 of sodium channels (Nav) and shift the voltage of activation toward more negative potentials thereby affecting sodium channel activation and promoting spontaneous and repetitive firing. The sequence is that of Toxin Cbi1 from Centruroides bicolor (Scorpion).